Here is a 471-residue protein sequence, read N- to C-terminus: Heat shock 70 kDa protein 13 (471 aa).

The N-terminal stretch at 1–22 (MAREMTILGSAVLTLLLAGYLA) is a signal peptide. The tract at residues 314-352 (EEQDRKEPHSSDTELPKDKLSSADDHRVNSGFGRGLSDK) is disordered. A compositionally biased stretch (basic and acidic residues) spans 315-341 (EQDRKEPHSSDTELPKDKLSSADDHRV).

The protein belongs to the heat shock protein 70 family. Binds UBQLN2.

It is found in the microsome. Its subcellular location is the endoplasmic reticulum. Its function is as follows. Has peptide-independent ATPase activity. This is Heat shock 70 kDa protein 13 (HSPA13) from Pongo abelii (Sumatran orangutan).